Reading from the N-terminus, the 155-residue chain is Deoxyuridine 5'-triphosphate nucleotidohydrolase (155 aa).

Residues 74-76 (RSG), Asn87, and 91-93 (LID) contribute to the substrate site.

This sequence belongs to the dUTPase family. The cofactor is Mg(2+).

It catalyses the reaction dUTP + H2O = dUMP + diphosphate + H(+). Its pathway is pyrimidine metabolism; dUMP biosynthesis; dUMP from dCTP (dUTP route): step 2/2. This enzyme is involved in nucleotide metabolism: it produces dUMP, the immediate precursor of thymidine nucleotides and it decreases the intracellular concentration of dUTP so that uracil cannot be incorporated into DNA. The protein is Deoxyuridine 5'-triphosphate nucleotidohydrolase of Xanthomonas oryzae pv. oryzae (strain MAFF 311018).